Reading from the N-terminus, the 356-residue chain is Protein-glutamate methylesterase/protein-glutamine glutaminase 2 (356 aa).

The 118-residue stretch at Arg-4–Glu-121 folds into the Response regulatory domain. The residue at position 55 (Asp-55) is a 4-aspartylphosphate. Residues Lys-161–Gly-356 enclose the CheB-type methylesterase domain. Residues Ser-173, His-200, and Asp-300 contribute to the active site.

Belongs to the CheB family. Post-translationally, phosphorylated by CheA. Phosphorylation of the N-terminal regulatory domain activates the methylesterase activity.

Its subcellular location is the cytoplasm. The catalysed reaction is [protein]-L-glutamate 5-O-methyl ester + H2O = L-glutamyl-[protein] + methanol + H(+). The enzyme catalyses L-glutaminyl-[protein] + H2O = L-glutamyl-[protein] + NH4(+). Involved in chemotaxis. Part of a chemotaxis signal transduction system that modulates chemotaxis in response to various stimuli. Catalyzes the demethylation of specific methylglutamate residues introduced into the chemoreceptors (methyl-accepting chemotaxis proteins or MCP) by CheR. Also mediates the irreversible deamidation of specific glutamine residues to glutamic acid. This Methanosarcina acetivorans (strain ATCC 35395 / DSM 2834 / JCM 12185 / C2A) protein is Protein-glutamate methylesterase/protein-glutamine glutaminase 2.